The chain runs to 486 residues: ATP synthase subunit beta (486 aa).

An ATP-binding site is contributed by 167 to 174 (GGAGVGKT).

It belongs to the ATPase alpha/beta chains family. F-type ATPases have 2 components, CF(1) - the catalytic core - and CF(0) - the membrane proton channel. CF(1) has five subunits: alpha(3), beta(3), gamma(1), delta(1), epsilon(1). CF(0) has three main subunits: a(1), b(2) and c(9-12). The alpha and beta chains form an alternating ring which encloses part of the gamma chain. CF(1) is attached to CF(0) by a central stalk formed by the gamma and epsilon chains, while a peripheral stalk is formed by the delta and b chains.

The protein resides in the cell inner membrane. It carries out the reaction ATP + H2O + 4 H(+)(in) = ADP + phosphate + 5 H(+)(out). Produces ATP from ADP in the presence of a proton gradient across the membrane. The catalytic sites are hosted primarily by the beta subunits. The chain is ATP synthase subunit beta from Anaplasma marginale (strain St. Maries).